We begin with the raw amino-acid sequence, 373 residues long: Pectin lyase D (373 aa).

The N-terminal stretch at 1 to 19 (MKYAAALTAIAALAARAAA) is a signal peptide. 2 disulfides stabilise this stretch: cysteine 82–cysteine 101 and cysteine 91–cysteine 225. The N-linked (GlcNAc...) asparagine glycan is linked to asparagine 128. Arginine 255 is an active-site residue. The N-linked (GlcNAc...) asparagine glycan is linked to asparagine 274. Cysteines 321 and 329 form a disulfide. Asparagine 348 carries N-linked (GlcNAc...) asparagine glycosylation. The span at 354-366 (LPSADAASTSPAS) shows a compositional bias: low complexity. The disordered stretch occupies residues 354–373 (LPSADAASTSPASNAGQGNL).

Belongs to the polysaccharide lyase 1 family. May be O-glycosylated; does not contain N-acetylglucosamine.

The protein resides in the secreted. It catalyses the reaction Eliminative cleavage of (1-&gt;4)-alpha-D-galacturonan methyl ester to give oligosaccharides with 4-deoxy-6-O-methyl-alpha-D-galact-4-enuronosyl groups at their non-reducing ends.. In terms of biological role, pectinolytic enzymes consist of four classes of enzymes: pectin lyase, polygalacturonase, pectin methylesterase and rhamnogalacturonase. Among pectinolytic enzymes, pectin lyase is the most important in depolymerization of pectin, since it cleaves internal glycosidic bonds of highly methylated pectins. The sequence is that of Pectin lyase D (pelD) from Aspergillus niger.